The sequence spans 101 residues: Urease subunit beta (101 aa).

The protein belongs to the urease beta subunit family. As to quaternary structure, heterotrimer of UreA (gamma), UreB (beta) and UreC (alpha) subunits. Three heterotrimers associate to form the active enzyme.

Its subcellular location is the cytoplasm. The enzyme catalyses urea + 2 H2O + H(+) = hydrogencarbonate + 2 NH4(+). It participates in nitrogen metabolism; urea degradation; CO(2) and NH(3) from urea (urease route): step 1/1. This Roseobacter denitrificans (strain ATCC 33942 / OCh 114) (Erythrobacter sp. (strain OCh 114)) protein is Urease subunit beta.